We begin with the raw amino-acid sequence, 333 residues long: Electron transfer flavoprotein subunit alpha, mitochondrial (333 aa).

The N-terminal 19 residues, 1-19, are a transit peptide targeting the mitochondrion; that stretch reads MFRAAAPGQLRRAASLLRF. A domain I region spans residues 20 to 204; it reads QSTLVIAEHA…GISEWLDQKL (185 aa). The residue at position 59 (lysine 59) is an N6-acetyllysine; alternate. Residue lysine 59 is modified to N6-succinyllysine; alternate. Position 62 is an N6-acetyllysine (lysine 62). Lysine 69 carries the post-translational modification N6-acetyllysine; alternate. Lysine 69 carries the post-translational modification N6-succinyllysine; alternate. Lysine 75 is subject to N6-acetyllysine. An N6-acetyllysine; alternate modification is found at lysine 85. Lysine 85 carries the post-translational modification N6-succinyllysine; alternate. A Phosphothreonine modification is found at threonine 93. N6-acetyllysine occurs at positions 101 and 139. The residue at position 140 (serine 140) is a Phosphoserine. Lysine 158 bears the N6-acetyllysine; alternate mark. N6-succinyllysine; alternate is present on lysine 158. The residue at position 164 (lysine 164) is an N6-acetyllysine. At lysine 187 the chain carries N6-succinyllysine. The residue at position 203 (lysine 203) is an N6-acetyllysine; alternate. Lysine 203 carries the post-translational modification N6-succinyllysine; alternate. Residues 205–333 form a domain II region; it reads TKSDRPELTG…PEMTEILKKK (129 aa). Position 216 is an N6-succinyllysine (lysine 216). Arginine 223 provides a ligand contact to FAD. An N6-acetyllysine; alternate mark is found at lysine 226 and lysine 232. Lysine 226 and lysine 232 each carry N6-succinyllysine; alternate. FAD is bound by residues serine 248, 263–266, 281–286, and asparagine 300; these read VGQT and SGAIQH. Lysine 301 bears the N6-succinyllysine mark. 318-319 is a binding site for FAD; it reads DL.

It belongs to the ETF alpha-subunit/FixB family. As to quaternary structure, heterodimer composed of ETFA and ETFB. Identified in a complex that contains ETFA, ETFB and ETFRF1. Interaction with ETFRF1 promotes dissociation of the bound FAD and loss of electron transfer activity. Interacts with TASOR. Requires FAD as cofactor. Expressed in the spermatogonia, spermatocytes, ovary and granular cells within the cerebellum.

It localises to the mitochondrion matrix. In terms of biological role, heterodimeric electron transfer flavoprotein that accepts electrons from several mitochondrial dehydrogenases, including acyl-CoA dehydrogenases, glutaryl-CoA and sarcosine dehydrogenase. It transfers the electrons to the main mitochondrial respiratory chain via ETF-ubiquinone oxidoreductase (ETF dehydrogenase). Required for normal mitochondrial fatty acid oxidation and normal amino acid metabolism. This is Electron transfer flavoprotein subunit alpha, mitochondrial (Etfa) from Mus musculus (Mouse).